The primary structure comprises 96 residues: Co-chaperonin GroES (96 aa).

The protein belongs to the GroES chaperonin family. Heptamer of 7 subunits arranged in a ring. Interacts with the chaperonin GroEL.

Its subcellular location is the cytoplasm. In terms of biological role, together with the chaperonin GroEL, plays an essential role in assisting protein folding. The GroEL-GroES system forms a nano-cage that allows encapsulation of the non-native substrate proteins and provides a physical environment optimized to promote and accelerate protein folding. GroES binds to the apical surface of the GroEL ring, thereby capping the opening of the GroEL channel. The protein is Co-chaperonin GroES of Herminiimonas arsenicoxydans.